Consider the following 498-residue polypeptide: Death-associated inhibitor of apoptosis 2 (498 aa).

3 BIR repeats span residues 12-77, 116-180, and 215-280; these read RLAT…SMVL, RLVT…PRVQ, and RLRT…QFVL. Positions 249, 252, 269, and 276 each coordinate Zn(2+). An RING-type zinc finger spans residues 451–486; that stretch reads CKVCLDEEVGVVFLPCGHLATCNQCAPSVANCPMCR.

This sequence belongs to the IAP family. In terms of assembly, interacts with the caspase Strica. Interacts (via BIR2 domain) with rpr and grim. Interacts (via the BIR2 and BIR3 domains) with hid. Interacts (via BIR3 domain) with Drice. Interacts with Dredd; likely to bind Dredd simultaneously with Fadd to form a trimeric complex. Caspase-dependent cleavage is required for suppression of Drice-mediated cell death. In terms of tissue distribution, expressed in both principal and stellar cells of the Malphigian tubules.

The protein resides in the nucleus. Its subcellular location is the cytoplasm. In terms of biological role, required for activation of NF-kappaB transcription factors in the immune deficiency (Imd) signaling cascade which is essential for innate immune responses upon infection by Gram-negative bacteria. Promotes cytoplasmic cleavage of Rel and its translocation to the nucleus where it drives expression of antimicrobial peptides. Binds, polyubiquitinates and activates Dredd which is required for Rel-mediated induction of antimicrobial peptides. Anti-apoptotic protein which binds, ubiquitinates and inactivates the effector caspase Drice. Suppresses rpr and hid-dependent cell death in the eye. However, has also been shown to have little, if any, role in the regulation of the canonical caspase-dependent apoptosis pathway. Plays a role in regulating the expression of ion channels. This is Death-associated inhibitor of apoptosis 2 (Diap2) from Drosophila melanogaster (Fruit fly).